The sequence spans 191 residues: Lipid A 1-phosphatase (191 aa).

5 helical membrane passes run 22 to 42 (LLAL…PKVP), 60 to 80 (FIPT…VGLF), 117 to 137 (GNFN…AFLM), 145 to 162 (YLWL…RIYL), and 164 to 184 (MHTI…VGLF).

This sequence belongs to the lipid A LpxE 1-phosphatase family.

The protein localises to the cell inner membrane. It functions in the pathway bacterial outer membrane biogenesis; LPS lipid A biosynthesis. In terms of biological role, removes the 1-phosphate group from tetra- and probably hexaacylated lipid A species. Absence of the 1-phosphate group renders the bacteria partially resistant to host-derived cationic antimicrobial peptides (CAMP), allowing it to camouflage itself from the host innate immune response, and plays a role in the long-term colonization of the host's stomach. The chain is Lipid A 1-phosphatase from Helicobacter pylori (strain J99 / ATCC 700824) (Campylobacter pylori J99).